Consider the following 248-residue polypeptide: Isoprenyl transferase (248 aa).

Asp-28 is a catalytic residue. Mg(2+) is bound at residue Asp-28. Substrate is bound by residues 29-32 (GNGR), Trp-33, Arg-41, His-45, and 73-75 (SSE). Asn-76 functions as the Proton acceptor in the catalytic mechanism. Substrate is bound by residues Trp-77, Arg-79, Arg-196, and 202–204 (RLS). Glu-215 lines the Mg(2+) pocket.

It belongs to the UPP synthase family. As to quaternary structure, homodimer. Mg(2+) is required as a cofactor.

Catalyzes the condensation of isopentenyl diphosphate (IPP) with allylic pyrophosphates generating different type of terpenoids. The polypeptide is Isoprenyl transferase (Zymomonas mobilis subsp. mobilis (strain ATCC 31821 / ZM4 / CP4)).